The sequence spans 187 residues: Nicotinamide-nucleotide adenylyltransferase (187 aa).

Belongs to the archaeal NMN adenylyltransferase family.

It is found in the cytoplasm. The catalysed reaction is beta-nicotinamide D-ribonucleotide + ATP + H(+) = diphosphate + NAD(+). It functions in the pathway cofactor biosynthesis; NAD(+) biosynthesis; NAD(+) from nicotinamide D-ribonucleotide: step 1/1. In Thermococcus onnurineus (strain NA1), this protein is Nicotinamide-nucleotide adenylyltransferase.